A 248-amino-acid polypeptide reads, in one-letter code: 2,3-bisphosphoglycerate-dependent phosphoglycerate mutase (248 aa).

Residues 10–17, 23–24, Arg-62, 89–92, Lys-100, 116–117, and 183–184 contribute to the substrate site; these read RHGQSQWN, TG, ERHY, RR, and GN. The active-site Tele-phosphohistidine intermediate is the His-11. Glu-89 serves as the catalytic Proton donor/acceptor.

The protein belongs to the phosphoglycerate mutase family. BPG-dependent PGAM subfamily.

The catalysed reaction is (2R)-2-phosphoglycerate = (2R)-3-phosphoglycerate. It functions in the pathway carbohydrate degradation; glycolysis; pyruvate from D-glyceraldehyde 3-phosphate: step 3/5. Functionally, catalyzes the interconversion of 2-phosphoglycerate and 3-phosphoglycerate. The sequence is that of 2,3-bisphosphoglycerate-dependent phosphoglycerate mutase from Corynebacterium kroppenstedtii (strain DSM 44385 / JCM 11950 / CIP 105744 / CCUG 35717).